The chain runs to 253 residues: MSFTVVIPARYGSSRLPGKPLADIAGKPMIQHVVERAEASGAAEVIVATDDMRIKEGVDKFGGRVMMTSSEHSSGTERLAEVIEQLALAENEVVVNVQGDEPFIPPEIIRQVADNLANQRQAPMATLAVPITDAEDIFNPNTVKVVTDAAGYALYFSRAAIPWDREHFSADRATNVVTEHYHRHIGIYAYRAGFVRRYIEWEPSPIEQLESLEQLRVLWHGERIHVAEAILAPATGIDTEEDLQRARKLAGDG.

This sequence belongs to the KdsB family.

It localises to the cytoplasm. The catalysed reaction is 3-deoxy-alpha-D-manno-oct-2-ulosonate + CTP = CMP-3-deoxy-beta-D-manno-octulosonate + diphosphate. Its pathway is nucleotide-sugar biosynthesis; CMP-3-deoxy-D-manno-octulosonate biosynthesis; CMP-3-deoxy-D-manno-octulosonate from 3-deoxy-D-manno-octulosonate and CTP: step 1/1. It participates in bacterial outer membrane biogenesis; lipopolysaccharide biosynthesis. Its function is as follows. Activates KDO (a required 8-carbon sugar) for incorporation into bacterial lipopolysaccharide in Gram-negative bacteria. This Idiomarina loihiensis (strain ATCC BAA-735 / DSM 15497 / L2-TR) protein is 3-deoxy-manno-octulosonate cytidylyltransferase.